The sequence spans 807 residues: Glycerol-3-phosphate acyltransferase (807 aa).

The HXXXXD motif motif lies at 305-310 (CHRSHM).

The protein belongs to the GPAT/DAPAT family.

The protein resides in the cell inner membrane. It catalyses the reaction sn-glycerol 3-phosphate + an acyl-CoA = a 1-acyl-sn-glycero-3-phosphate + CoA. It participates in phospholipid metabolism; CDP-diacylglycerol biosynthesis; CDP-diacylglycerol from sn-glycerol 3-phosphate: step 1/3. This Shigella boydii serotype 18 (strain CDC 3083-94 / BS512) protein is Glycerol-3-phosphate acyltransferase.